Here is a 507-residue protein sequence, read N- to C-terminus: GMP synthase [glutamine-hydrolyzing] (507 aa).

In terms of domain architecture, Glutamine amidotransferase type-1 spans 3 to 190; sequence KILVIDYGSQ…IQGICGLKGS (188 aa). The active-site Nucleophile is the C77. Residues H164 and E166 contribute to the active site. The GMPS ATP-PPase domain occupies 191–382; the sequence is WTLMDFVENK…LGLPREILYR (192 aa). An ATP-binding site is contributed by 218-224; that stretch reads SGGVDSS.

In terms of assembly, homodimer.

The catalysed reaction is XMP + L-glutamine + ATP + H2O = GMP + L-glutamate + AMP + diphosphate + 2 H(+). Its pathway is purine metabolism; GMP biosynthesis; GMP from XMP (L-Gln route): step 1/1. Its function is as follows. Catalyzes the synthesis of GMP from XMP. The chain is GMP synthase [glutamine-hydrolyzing] from Petrotoga mobilis (strain DSM 10674 / SJ95).